A 59-amino-acid chain; its full sequence is Cuticle protein 16 isoform D (59 aa).

The protein is Cuticle protein 16 isoform D of Limulus polyphemus (Atlantic horseshoe crab).